A 208-amino-acid polypeptide reads, in one-letter code: Large ribosomal subunit protein eL13 (208 aa).

The protein belongs to the eukaryotic ribosomal protein eL13 family.

This chain is Large ribosomal subunit protein eL13 (RPL13), found in Chlamydomonas sp. (strain W80).